Reading from the N-terminus, the 182-residue chain is Large ribosomal subunit protein uL6 (182 aa).

The protein belongs to the universal ribosomal protein uL6 family. Part of the 50S ribosomal subunit.

Its function is as follows. This protein binds to the 23S rRNA, and is important in its secondary structure. It is located near the subunit interface in the base of the L7/L12 stalk, and near the tRNA binding site of the peptidyltransferase center. The sequence is that of Large ribosomal subunit protein uL6 from Karelsulcia muelleri (strain GWSS) (Sulcia muelleri).